A 75-amino-acid polypeptide reads, in one-letter code: Serine rich endogenous peptide 20 (75 aa).

Residues 1–25 (MYKLTLCILTLSFLLLSGLSNTVLA) form the signal peptide. Residues 52 to 66 (KIGASGSNSGRAPSC) carry the SCOOP motif motif. The interval 54-75 (GASGSNSGRAPSCNNSCKPNRP) is disordered. The SxS motif essential for MIK2 binding motif lies at 56–58 (SGS). The segment covering 56-75 (SGSNSGRAPSCNNSCKPNRP) has biased composition (polar residues).

It belongs to the serine rich endogenous peptide (SCOOP) phytocytokine family. In terms of assembly, interacts with MIK2 (via extracellular leucine-rich repeat domain); this interaction triggers the formation of complex between MIK2 and the BAK1/SERK3 and SERK4 coreceptors, and subsequent BAK1 activation by phosphorylation. As to expression, mostly expressed in roots.

It localises to the cell membrane. It is found in the secreted. The protein localises to the extracellular space. Its subcellular location is the apoplast. In terms of biological role, brassicaceae-specific phytocytokine (plant endogenous peptide released into the apoplast) perceived by MIK2 in a BAK1/SERK3 and SERK4 coreceptors-dependent manner, that modulates various physiological and antimicrobial processes including growth prevention and reactive oxygen species (ROS) response regulation. Inhibits root growth. The chain is Serine rich endogenous peptide 20 from Arabidopsis thaliana (Mouse-ear cress).